The primary structure comprises 65 residues: MALPRNVIPMPRSRFLRVKCIDCGNEQIVFSHPATRVRCNVCGATLVEPTGGKGIIRAKILEVLE.

Positions 20, 23, 39, and 42 each coordinate Zn(2+). The C4-type zinc finger occupies 20-42; sequence CIDCGNEQIVFSHPATRVRCNVC.

This sequence belongs to the eukaryotic ribosomal protein eS27 family. In terms of assembly, part of the 30S ribosomal subunit. The cofactor is Zn(2+).

This is Small ribosomal subunit protein eS27 from Pyrococcus abyssi (strain GE5 / Orsay).